Consider the following 134-residue polypeptide: Small ribosomal subunit protein uS8c (134 aa).

The protein belongs to the universal ribosomal protein uS8 family. As to quaternary structure, part of the 30S ribosomal subunit.

It localises to the plastid. The protein resides in the chloroplast. Functionally, one of the primary rRNA binding proteins, it binds directly to 16S rRNA central domain where it helps coordinate assembly of the platform of the 30S subunit. The chain is Small ribosomal subunit protein uS8c (rps8) from Panax ginseng (Korean ginseng).